Consider the following 369-residue polypeptide: uncharacterized protein (369 aa).

A compositionally biased stretch (low complexity) spans 110 to 121 (ARPTDAFGAPIA). The tract at residues 110–172 (ARPTDAFGAP…PPPPASGGGA (63 aa)) is disordered. Over residues 122–136 (PSEPTPASAPSPPKA) the composition is skewed to pro residues.

This is an uncharacterized protein from Lymantria dispar multicapsid nuclear polyhedrosis virus (LdMNPV).